A 793-amino-acid chain; its full sequence is Endonuclease MutS2 (793 aa).

335-342 (GPNTGGKT) is an ATP binding site. The Smr domain maps to 718–793 (IDVRGYNLEE…ESGVTIVELR (76 aa)).

This sequence belongs to the DNA mismatch repair MutS family. MutS2 subfamily. As to quaternary structure, homodimer. Binds to stalled ribosomes, contacting rRNA.

In terms of biological role, endonuclease that is involved in the suppression of homologous recombination and thus may have a key role in the control of bacterial genetic diversity. Acts as a ribosome collision sensor, splitting the ribosome into its 2 subunits. Detects stalled/collided 70S ribosomes which it binds and splits by an ATP-hydrolysis driven conformational change. Acts upstream of the ribosome quality control system (RQC), a ribosome-associated complex that mediates the extraction of incompletely synthesized nascent chains from stalled ribosomes and their subsequent degradation. Probably generates substrates for RQC. The protein is Endonuclease MutS2 of Acetivibrio thermocellus (strain ATCC 27405 / DSM 1237 / JCM 9322 / NBRC 103400 / NCIMB 10682 / NRRL B-4536 / VPI 7372) (Clostridium thermocellum).